The primary structure comprises 138 residues: Basic phospholipase A2 trimucrotoxin (138 aa).

A signal peptide spans 1–16 (MRTLWIVAVLLLGVEG). 7 disulfide bridges follow: Cys42–Cys131, Cys44–Cys60, Cys59–Cys111, Cys65–Cys138, Cys66–Cys104, Cys73–Cys97, and Cys91–Cys102. Positions 43, 45, and 47 each coordinate Ca(2+). Residue His63 is part of the active site. Residue Asp64 coordinates Ca(2+). Asp105 is a catalytic residue.

The protein belongs to the phospholipase A2 family. Group II subfamily. D49 sub-subfamily. As to quaternary structure, homodimer. It depends on Ca(2+) as a cofactor. Expressed by the venom gland.

It localises to the secreted. It carries out the reaction a 1,2-diacyl-sn-glycero-3-phosphocholine + H2O = a 1-acyl-sn-glycero-3-phosphocholine + a fatty acid + H(+). Snake venom phospholipase A2 (PLA2) that displays edema-inducing activities, as well as presynaptic neurotoxicity and low myotoxicity. PLA2 catalyzes the calcium-dependent hydrolysis of the 2-acyl groups in 3-sn-phosphoglycerides. The chain is Basic phospholipase A2 trimucrotoxin from Protobothrops mucrosquamatus (Taiwan habu).